A 340-amino-acid polypeptide reads, in one-letter code: HTH-type transcriptional regulator GalS (340 aa).

In terms of domain architecture, HTH lacI-type spans 1 to 56 (MITIRDVARQAGVSVATVSRVLNNSALVSPDTRDAVMQAVTLLGYRPNANAQALAT). A DNA-binding region (H-T-H motif) is located at residues 4-23 (IRDVARQAGVSVATVSRVLN).

Homodimer.

Functionally, repressor of the mgl operon. Binds galactose and D-fucose as inducers. GalS binds to an operator DNA sequence within its own coding sequence. The chain is HTH-type transcriptional regulator GalS (galS) from Salmonella typhimurium (strain LT2 / SGSC1412 / ATCC 700720).